We begin with the raw amino-acid sequence, 490 residues long: Betaine aldehyde dehydrogenase (490 aa).

K(+) contacts are provided by Ile27 and Asp93. 150 to 152 (GAW) serves as a coordination point for NAD(+). The Charge relay system role is filled by Lys162. Position 176 to 179 (176 to 179 (KPSE)) interacts with NAD(+). A K(+)-binding site is contributed by Val180. 230-233 (GTTT) is an NAD(+) binding site. K(+) is bound at residue Leu246. Glu252 acts as the Proton acceptor in catalysis. NAD(+)-binding residues include Gly254, Cys286, and Glu387. The active-site Nucleophile is the Cys286. The residue at position 286 (Cys286) is a Cysteine sulfenic acid (-SOH). K(+) contacts are provided by Lys457 and Gly460. The active-site Charge relay system is the Glu464.

Belongs to the aldehyde dehydrogenase family. In terms of assembly, dimer of dimers. The cofactor is K(+).

The enzyme catalyses betaine aldehyde + NAD(+) + H2O = glycine betaine + NADH + 2 H(+). The protein operates within amine and polyamine biosynthesis; betaine biosynthesis via choline pathway; betaine from betaine aldehyde: step 1/1. Involved in the biosynthesis of the osmoprotectant glycine betaine. Catalyzes the irreversible oxidation of betaine aldehyde to the corresponding acid. The protein is Betaine aldehyde dehydrogenase of Pseudomonas putida (strain GB-1).